Consider the following 259-residue polypeptide: Deoxyribose-phosphate aldolase (259 aa).

Asp102 acts as the Proton donor/acceptor in catalysis. Lys167 acts as the Schiff-base intermediate with acetaldehyde in catalysis. Catalysis depends on Lys201, which acts as the Proton donor/acceptor.

Belongs to the DeoC/FbaB aldolase family. DeoC type 2 subfamily.

The protein localises to the cytoplasm. The catalysed reaction is 2-deoxy-D-ribose 5-phosphate = D-glyceraldehyde 3-phosphate + acetaldehyde. It participates in carbohydrate degradation; 2-deoxy-D-ribose 1-phosphate degradation; D-glyceraldehyde 3-phosphate and acetaldehyde from 2-deoxy-alpha-D-ribose 1-phosphate: step 2/2. Its function is as follows. Catalyzes a reversible aldol reaction between acetaldehyde and D-glyceraldehyde 3-phosphate to generate 2-deoxy-D-ribose 5-phosphate. The sequence is that of Deoxyribose-phosphate aldolase from Erwinia tasmaniensis (strain DSM 17950 / CFBP 7177 / CIP 109463 / NCPPB 4357 / Et1/99).